Reading from the N-terminus, the 289-residue chain is Acetyl-coenzyme A carboxylase carboxyl transferase subunit beta 2 (289 aa).

The CoA carboxyltransferase N-terminal domain maps to 25–289; it reads VWTKCPSCDQ…TNTSIRLEVK (265 aa). 4 residues coordinate Zn(2+): Cys29, Cys32, Cys48, and Cys51. The C4-type zinc-finger motif lies at 29–51; the sequence is CPSCDQVLYRIALKENLEVCPKC.

It belongs to the AccD/PCCB family. Acetyl-CoA carboxylase is a heterohexamer composed of biotin carboxyl carrier protein (AccB), biotin carboxylase (AccC) and two subunits each of ACCase subunit alpha (AccA) and ACCase subunit beta (AccD). It depends on Zn(2+) as a cofactor.

The protein resides in the cytoplasm. It catalyses the reaction N(6)-carboxybiotinyl-L-lysyl-[protein] + acetyl-CoA = N(6)-biotinyl-L-lysyl-[protein] + malonyl-CoA. It functions in the pathway lipid metabolism; malonyl-CoA biosynthesis; malonyl-CoA from acetyl-CoA: step 1/1. Its function is as follows. Component of the acetyl coenzyme A carboxylase (ACC) complex. Biotin carboxylase (BC) catalyzes the carboxylation of biotin on its carrier protein (BCCP) and then the CO(2) group is transferred by the transcarboxylase to acetyl-CoA to form malonyl-CoA. The protein is Acetyl-coenzyme A carboxylase carboxyl transferase subunit beta 2 of Vibrio parahaemolyticus serotype O3:K6 (strain RIMD 2210633).